The sequence spans 468 residues: Protein C-ets-2 (468 aa).

Residues 85–170 (ATFSGFQKEQ…EHLEQMIKEN (86 aa)) enclose the PNT domain. 2 positions are modified to phosphoserine: Ser220 and Ser225. Residues 262–290 (VNLLNNNSGKPKDHDSPENGGDSFESSDS) form a disordered region. Phosphoserine is present on residues Ser294, Ser297, and Ser300. Positions 362-442 (IQLWQFLLEL…SGKRYVYRFV (81 aa)) form a DNA-binding region, ETS.

Belongs to the ETS family. Post-translationally, phosphorylation by CDK10 at Ser-220 and Ser-225 creates a phosphodegron that targets ETS2 for proteasomal degradation.

Its subcellular location is the nucleus. Its function is as follows. Transcription factor activating transcription. Binds specifically the GGA DNA motif in gene promoters and stimulates transcription of those genes. The protein is Protein C-ets-2 (Ets2) of Mus musculus (Mouse).